Here is a 283-residue protein sequence, read N- to C-terminus: MSDWSALHQLLEKVQPYSTAGGKVWIKVLFIFRILLLGTAIESAWSDEQFEFHCNTQQPGCENVCYDHAFPISHVRLWVLQVIFVSVPILLYLAHVYYVVRQNKKLNKQEEELEAAHFNEASVERHLETIAGEQFKCGSEEQSKVKMRGRLLLTYMASIFFKSVFEMAFLLIQWYIYGFTLSALYICEQSPCPRRVDCFLSRPTEKTIFILFMFVVSVVSFVLDIIELFYVLFKAIKNRMRKAEDEVYCDELPCPSHVSSSTVLTTIDSSEQAVPVELSSVCI.

Residues 1-23 (MSDWSALHQLLEKVQPYSTAGGK) lie on the Cytoplasmic side of the membrane. Residues 24–41 (VWIKVLFIFRILLLGTAI) traverse the membrane as a helical segment. Topologically, residues 42 to 76 (ESAWSDEQFEFHCNTQQPGCENVCYDHAFPISHVR) are extracellular. A helical membrane pass occupies residues 77-99 (LWVLQVIFVSVPILLYLAHVYYV). Topologically, residues 100-150 (VRQNKKLNKQEEELEAAHFNEASVERHLETIAGEQFKCGSEEQSKVKMRGR) are cytoplasmic. A helical membrane pass occupies residues 151–173 (LLLTYMASIFFKSVFEMAFLLIQ). The Extracellular segment spans residues 174-208 (WYIYGFTLSALYICEQSPCPRRVDCFLSRPTEKTI). The helical transmembrane segment at 209–231 (FILFMFVVSVVSFVLDIIELFYV) threads the bilayer. Over 232–283 (LFKAIKNRMRKAEDEVYCDELPCPSHVSSSTVLTTIDSSEQAVPVELSSVCI) the chain is Cytoplasmic.

Belongs to the connexin family. Alpha-type (group II) subfamily. As to quaternary structure, a connexon is composed of a hexamer of connexins.

The protein localises to the cell membrane. It localises to the cell junction. It is found in the gap junction. Its function is as follows. One gap junction consists of a cluster of closely packed pairs of transmembrane channels, the connexons, through which materials of low MW diffuse from one cell to a neighboring cell. In Mus musculus (Mouse), this protein is Gap junction alpha-6 protein (Gja6).